Consider the following 478-residue polypeptide: Vitronectin (478 aa).

The first 19 residues, methionine 1–alanine 19, serve as a signal peptide directing secretion. Residues aspartate 20–threonine 63 enclose the SMB domain. Disulfide bonds link cysteine 24–cysteine 28, cysteine 24–cysteine 40, cysteine 28–cysteine 58, cysteine 38–cysteine 40, cysteine 38–cysteine 51, cysteine 44–cysteine 50, and cysteine 51–cysteine 58. The short motif at arginine 64 to aspartate 66 is the Cell attachment site element. A Phosphothreonine modification is found at threonine 69. A sulfotyrosine mark is found at tyrosine 75, tyrosine 78, and tyrosine 80. The disordered stretch occupies residues glutamate 82–glutamate 153. Asparagine 86 carries N-linked (GlcNAc...) asparagine glycosylation. The segment covering asparagine 86–proline 99 has biased composition (polar residues). The span at glutamate 131 to threonine 141 shows a compositional bias: basic and acidic residues. Hemopexin repeat units lie at residues glycine 157 to isoleucine 201, glutamate 202 to isoleucine 249, and proline 250 to phenylalanine 304. N-linked (GlcNAc...) asparagine glycosylation is found at asparagine 168 and asparagine 241. Residues tyrosine 278 and tyrosine 281 each carry the sulfotyrosine modification. A disulfide bridge connects residues cysteine 292 and cysteine 431. Phosphoserine occurs at positions 311 and 362. A disordered region spans residues leucine 359–arginine 395. A compositionally biased stretch (basic residues) spans glutamine 364–serine 389. Residues lysine 366–arginine 399 form a heparin-binding region. Residue serine 398 is modified to Phosphoserine; by PKA. Residues tyrosine 416, tyrosine 419, and tyrosine 421 each carry the sulfotyrosine modification. The stretch at aspartate 420–cysteine 473 is one Hemopexin 4 repeat.

As to quaternary structure, interacts with SERPINE1/PAI1, insulin and C1QBP. In terms of processing, sulfated on tyrosine residues. Post-translationally, N- and O-glycosylated. It has been suggested that the active SMB domain may be permitted considerable disulfide bond heterogeneity or variability, thus two alternate disulfide patterns based on 3D structures are described with 1 disulfide bond conserved in both. As to expression, plasma.

The protein resides in the secreted. Its subcellular location is the extracellular space. In terms of biological role, vitronectin is a cell adhesion and spreading factor found in serum and tissues. Vitronectin interact with glycosaminoglycans and proteoglycans. Is recognized by certain members of the integrin family and serves as a cell-to-substrate adhesion molecule. Inhibitor of the membrane-damaging effect of the terminal cytolytic complement pathway. The protein is Vitronectin (Vtn) of Mus musculus (Mouse).